Here is a 724-residue protein sequence, read N- to C-terminus: Ribosomal RNA processing protein 1 homolog B (724 aa).

Positions N331 to L576 are disordered. Phosphoserine occurs at positions 336 and 370. The segment covering H373–H386 has biased composition (basic residues). 2 positions are modified to phosphoserine: S432 and S438. The segment covering H448–A461 has biased composition (basic residues). Residues S483–S496 are compositionally biased toward low complexity. S494 carries the post-translational modification Phosphoserine. Composition is skewed to polar residues over residues D513 to S528 and K548 to P564. An N6-acetyllysine modification is found at K618. Positions A625–K649 are disordered. Over residues L640 to K649 the composition is skewed to polar residues. 2 positions are modified to phosphoserine: S668 and S672. Residue R678 is modified to Citrulline. Positions P687–F724 are disordered. T694 carries the phosphothreonine modification. Low complexity predominate over residues T694–P706. Phosphoserine is present on residues S698 and S701.

This sequence belongs to the RRP1 family. In terms of assembly, interacts with the transcriptional activator E2F1. Interacts with serine/threonine-protein phosphatase PP1 subunits PPP1CB and PPP1CC but not with PPP1CA. Interacts with 60S ribosomal proteins RPL5 and RPL27, ribosomal processing protein RRP1/NNP1 and other nucleolar proteins including NOP2/NOL1 and FBL. Also interacts with nucleolar protein NPM1/B23. Interacts with splicing factor SRSF1 and LUC7L3/CROP. Interacts with GTPase activator SIPA1. Interacts with H1-10, NCL, PARP1, TRIM28 and YBX3. In terms of processing, citrullinated by PADI4.

The protein localises to the nucleus. It is found in the nucleolus. The protein resides in the nucleoplasm. It localises to the chromosome. Its function is as follows. Positively regulates DNA damage-induced apoptosis by acting as a transcriptional coactivator of proapoptotic target genes of the transcriptional activator E2F1. Likely to play a role in ribosome biogenesis by targeting serine/threonine protein phosphatase PP1 to the nucleolus. Involved in regulation of mRNA splicing. Inhibits SIPA1 GTPase activity. Involved in regulating expression of extracellular matrix genes. Associates with chromatin and may play a role in modulating chromatin structure. The polypeptide is Ribosomal RNA processing protein 1 homolog B (Rrp1b) (Mus musculus (Mouse)).